Consider the following 308-residue polypeptide: Serine/threonine-protein phosphatase 4 catalytic subunit (308 aa).

Mn(2+)-binding residues include D51, H53, D79, and N111. Catalysis depends on H112, which acts as the Proton donor. Mn(2+) contacts are provided by H161 and H235.

It belongs to the PPP phosphatase family. PP-4 (PP-X) subfamily. Catalytic subunit of the histone H2A phosphatase complex (HTP-C) containing PPH3, PSY2 and PSY4. Inactivated in a complex with phosphatase methylesterase PPE1 (PP2Ai). Interacts with phosphatase 2A activator RRD1, which can reactivate PP2Ai by dissociating the catalytic subunit from the complex. Interacts with SPT5 and TAP42. Mn(2+) serves as cofactor. In terms of processing, reversibly methyl esterified on Leu-308 by leucine carboxyl methyltransferase 1 (PPM1) and protein phosphatase methylesterase 1 (PPE1). Carboxyl methylation influences the affinity of the catalytic subunit for the different regulatory subunits, thereby modulating the PP2A holoenzyme's substrate specificity, enzyme activity and cellular localization.

It is found in the cytoplasm. Its subcellular location is the nucleus. It carries out the reaction O-phospho-L-seryl-[protein] + H2O = L-seryl-[protein] + phosphate. It catalyses the reaction O-phospho-L-threonyl-[protein] + H2O = L-threonyl-[protein] + phosphate. In terms of biological role, forms the histone H2A phosphatase complex in association with the regulatory subunits PSY2 and PSY4, which dephosphorylates H2AS128ph (gamma-H2A) that has been displaced from sites of DNA lesions in the double-stranded DNA break repair process. Dephosphorylation is necessary for efficient recovery from the DNA damage checkpoint. PPH3 is directly involved in the dephosphorylation and activation of the transcription factor GLN3 in response to nutrient availability. This is Serine/threonine-protein phosphatase 4 catalytic subunit (PPH3) from Saccharomyces cerevisiae (strain ATCC 204508 / S288c) (Baker's yeast).